We begin with the raw amino-acid sequence, 239 residues long: Probable transcriptional regulatory protein BCAH187_A0615 (239 aa).

The protein belongs to the TACO1 family. YeeN subfamily.

Its subcellular location is the cytoplasm. The chain is Probable transcriptional regulatory protein BCAH187_A0615 from Bacillus cereus (strain AH187).